The sequence spans 215 residues: UPF0502 protein Shew_1617 (215 aa).

This sequence belongs to the UPF0502 family.

This is UPF0502 protein Shew_1617 from Shewanella loihica (strain ATCC BAA-1088 / PV-4).